A 516-amino-acid polypeptide reads, in one-letter code: MNMDSIASFSHPFLWTAFAVGVVYCCTRMVSELFLSPLSHIPGPKLAACTRLYEFFYDVICHGRYTFKIAELHEKYGPIVRISPTEIHINDPEFYETLYSTSAPRNKDPWFTTNFDVAESAFSTLDYRLHRPRRALIAPYFAKARVDRIQPLIQGKITKLMRQLDEYARAGKPLKVDVAYNCFTADVITGYTSYRPLGYLDTPDMVPIWSETVRNLVEIGMIARHLPGFFPLLASTGARCIQMVYPKLLSVIAFRVKCIQEVNFMWTHPETATKDAAQAECSEPALFPELVSRASTTPDITEERVLHEFITIVAAGTETTAHTMTVCTFHILNNKDILRRLRAELNDKFPGDATMDLQTLEQLPYLTGIIYEGLRLSYGLSHRLQRISPTDPLKYKDVVIPPNTPVGMSSALIHHDETIFPQSHAFIPDRWTDINERRRLNKYMVAFSKGSRQCIGMNLAFAELYMAVAALFRKYDMELQDTTVDDVKLHSDMMLPHAKKGSKGVRVILKPAQGGE.

The helical transmembrane segment at 13–30 threads the bilayer; the sequence is FLWTAFAVGVVYCCTRMV. C454 is a binding site for heme.

This sequence belongs to the cytochrome P450 family. It depends on heme as a cofactor.

The protein localises to the membrane. The enzyme catalyses 7-methylmellein + 3 reduced [NADPH--hemoprotein reductase] + 3 O2 = 7-carboxymellein + 3 oxidized [NADPH--hemoprotein reductase] + 4 H2O + 4 H(+). The protein operates within mycotoxin biosynthesis. Its function is as follows. Cytochrome P450 monooxygenase; part of the gene cluster that mediates the biosynthesis of ochratoxin A (OTA), a mycotoxin composed of a chlorinated type I polyketide dihydroisocoumarin moiety linked to L-phenylalanine, and demonstrated to have nephrotoxic, immunotoxic, genotoxic, neurotoxic, and teratogenic properties. OtaC catalyzes the oxidation of 7-methylmellein (7-MM) into 7-carboxymellein. The pathway begins with the highly reducing polyketide synthase otaA that catalyzes the formation of the isocoumarin group during the initial stages of biosynthesis, starting from one acetate and 4 malonate units, to originate the characteristic pentaketide skeleton 7-methylmellein (7-MM) of the OTA molecule. The newly identified cyclase otaY might be involved in the polyketide cyclization reaction during the initial steps of the OTA biosynthesis. 7-MM is then oxidized into 7-carboxymellein (also called ochratoxin beta) by the cytochrome P450 monooxygenase otaC. The NRPS encoded by the otaB gene is involved in the linking of phenylalanine to the dihydroisocoumarin ring. The reaction catalyzed by NRPS results in the production of ochratoxin B (OTB), which is the non-chlorinated analog of OTA and which subsequently serves as the substrate of the halogenase otaD for chlorination activity to form the final molecular structure of OTA, containing a chlorine atom in the C-5 position of the molecule. The chain is Cytochrome P450 monooxygenase otaC from Aspergillus carbonarius (strain ITEM 5010).